We begin with the raw amino-acid sequence, 334 residues long: Phosphate acyltransferase (334 aa).

Belongs to the PlsX family. As to quaternary structure, homodimer. Probably interacts with PlsY.

The protein localises to the cytoplasm. It catalyses the reaction a fatty acyl-[ACP] + phosphate = an acyl phosphate + holo-[ACP]. It functions in the pathway lipid metabolism; phospholipid metabolism. Functionally, catalyzes the reversible formation of acyl-phosphate (acyl-PO(4)) from acyl-[acyl-carrier-protein] (acyl-ACP). This enzyme utilizes acyl-ACP as fatty acyl donor, but not acyl-CoA. This is Phosphate acyltransferase from Caldicellulosiruptor saccharolyticus (strain ATCC 43494 / DSM 8903 / Tp8T 6331).